Consider the following 270-residue polypeptide: Orotidine 5'-phosphate decarboxylase (270 aa).

Substrate contacts are provided by residues D43, 65 to 67, 96 to 105, Y217, and R236; these read KTH and DRKFGDIGST. The active-site Proton donor is K98.

The protein belongs to the OMP decarboxylase family.

The catalysed reaction is orotidine 5'-phosphate + H(+) = UMP + CO2. The protein operates within pyrimidine metabolism; UMP biosynthesis via de novo pathway; UMP from orotate: step 2/2. The chain is Orotidine 5'-phosphate decarboxylase (URA3) from Aureobasidium pullulans (Black yeast).